The chain runs to 88 residues: Small ribosomal subunit protein bS16 (88 aa).

This sequence belongs to the bacterial ribosomal protein bS16 family.

The polypeptide is Small ribosomal subunit protein bS16 (Anaeromyxobacter sp. (strain Fw109-5)).